The sequence spans 544 residues: Chaperonin GroEL (544 aa).

Residues 30 to 33 (TLGP), Lys-51, 87 to 91 (DGTTT), Gly-415, and Asp-495 contribute to the ATP site.

It belongs to the chaperonin (HSP60) family. In terms of assembly, forms a cylinder of 14 subunits composed of two heptameric rings stacked back-to-back. Interacts with the co-chaperonin GroES.

Its subcellular location is the cytoplasm. The catalysed reaction is ATP + H2O + a folded polypeptide = ADP + phosphate + an unfolded polypeptide.. In terms of biological role, together with its co-chaperonin GroES, plays an essential role in assisting protein folding. The GroEL-GroES system forms a nano-cage that allows encapsulation of the non-native substrate proteins and provides a physical environment optimized to promote and accelerate protein folding. The sequence is that of Chaperonin GroEL from Bartonella bacilliformis (strain ATCC 35685 / KC583 / Herrer 020/F12,63).